The following is a 98-amino-acid chain: Acylphosphatase (98 aa).

Positions 10–96 (ARLLRIRGRV…TDGAGFDCLP (87 aa)) constitute an Acylphosphatase-like domain. Residues arginine 25 and asparagine 43 contribute to the active site.

The protein belongs to the acylphosphatase family.

It catalyses the reaction an acyl phosphate + H2O = a carboxylate + phosphate + H(+). This is Acylphosphatase (acyP) from Azoarcus sp. (strain BH72).